A 351-amino-acid polypeptide reads, in one-letter code: UDP-N-acetylglucosamine transporter slc35b4 (351 aa).

The next 10 helical transmembrane spans lie at 6 to 26 (LISL…VISL), 37 to 57 (AILV…FVNI), 77 to 97 (IPLK…VLNN), 104 to 124 (IPIP…IVIG), 136 to 156 (QILS…SSMP), 173 to 193 (FSIG…LGLI), 209 to 229 (TIFY…DDIL), 252 to 274 (TLWV…VFIL), 282 to 302 (TCTL…VIYF), and 306 to 326 (FTSL…MYST).

This sequence belongs to the nucleotide-sugar transporter family. SLC35B subfamily.

The protein resides in the golgi apparatus membrane. In terms of biological role, sugar transporter that specifically mediates the transport of UDP-N-acetylglucosamine (UDP-GlcNAc) from cytosol into Golgi. This is UDP-N-acetylglucosamine transporter slc35b4 (slc35b4) from Dictyostelium discoideum (Social amoeba).